The sequence spans 185 residues: MTLPGPEAPGLSEALALIADVPDFPQPGILFKDITPLLAEHAALEAVVAALAAPGRDQTGAPVVDKVLGMESRGFILGAPVALALGVGFVPVRKAGKLPRATYAVSYALEYGEATLEVHQDALEPGDRVLLVDDVLATGGTARATIDLVEKCGASVHAVAILMELGFLPGREALGTVPLTTLLTV.

It belongs to the purine/pyrimidine phosphoribosyltransferase family. Homodimer.

It is found in the cytoplasm. The enzyme catalyses AMP + diphosphate = 5-phospho-alpha-D-ribose 1-diphosphate + adenine. The protein operates within purine metabolism; AMP biosynthesis via salvage pathway; AMP from adenine: step 1/1. Its function is as follows. Catalyzes a salvage reaction resulting in the formation of AMP, that is energically less costly than de novo synthesis. The polypeptide is Adenine phosphoribosyltransferase (Nocardioides sp. (strain ATCC BAA-499 / JS614)).